We begin with the raw amino-acid sequence, 235 residues long: 15,16-dihydrobiliverdin:ferredoxin oxidoreductase (235 aa).

Belongs to the HY2 family.

The enzyme catalyses 15,16-dihydrobiliverdin + oxidized 2[4Fe-4S]-[ferredoxin] = biliverdin IXalpha + reduced 2[4Fe-4S]-[ferredoxin] + 2 H(+). In terms of biological role, catalyzes the two-electron reduction of biliverdin IX-alpha at the C15 methine bridge. The chain is 15,16-dihydrobiliverdin:ferredoxin oxidoreductase from Synechococcus sp. (strain CC9605).